The following is a 324-amino-acid chain: MMEKLKSEQFPLSPSAEGCASPPRGDGDARGKQEGTTAETGEHRLPEELNGVAKETAHHATELKKEVAVIELSRRGGSADIKGRELKAELSHKVQTTELCRPPIPLPLPPRDPLSDTRMVQLSPPAFPLPARAMLYSNMTTPLATINSGFAGDAEQYGMYPSNRVKRRPAPYEVEINDGSQPKIVRRIFTNSRERWRQQNVNGAFAELRKLIPTHPPDKKLSKNEILRLAMKYINFLAKLLNDQDDMVGGEAPARANRDSRDATLVRDDLLQEMLSPNSSCGSLLDGDASPESFTEDQDSSVESRPSARGLHHSSLPLDGNAQR.

Residues 1-49 are disordered; sequence MMEKLKSEQFPLSPSAEGCASPPRGDGDARGKQEGTTAETGEHRLPEEL. The bHLH domain occupies 185 to 237; sequence VRRIFTNSRERWRQQNVNGAFAELRKLIPTHPPDKKLSKNEILRLAMKYINFL. The disordered stretch occupies residues 276–324; that stretch reads SPNSSCGSLLDGDASPESFTEDQDSSVESRPSARGLHHSSLPLDGNAQR.

As to expression, expressed in hemopoietic and endothelial lineages. Isoform beta emerges first, expressing in the entire anterior and posterior lateral mesoderm (ALM and PLM respectively), and in the ventral wall of the dorsal aorta, where definitive hemopoiesis begins. Isoform alpha expresses later as two pairs of stripes in the PLM and ALM, and becomes restricted to the intermediate cell mass (ICM) by the 18-somite stage. The ICM is the key site of primitive hemopoiesis, giving rise to the erythroid lineage. Also expressed in all stages of endocardial cell migration and in the developing midbrain, hindbrain and spinal cord. In adults, expressed in the main hemopoietic organs, namely the kidney (where isoform alpha is the predominant isoform) and the spleen. Also expressed in the liver, gill and gonads.

The protein localises to the nucleus. Transcription factor that plays a pivotal role in hemopoietic and endothelial development, acting synergistically with lmo2 and downstream of clo. Specifies mesodermal precursors to a hemangioblast cell fate. Hemangioblasts are bipotential precursors of blood and endothelium, and in the absence of hemopoietic induction cues such as gata1, tal1/scl-lmo2-induced hemangioblasts differentiate into endothelial cells. Isoform alpha and isoform beta are redundant for the initiation of primitive hemopoiesis but have distinct roles in the regulation of primitive erythroid differentiation and definitive hemopoietic stem cell specification, most likely due to differences in expression levels. Specification of definitive hemopoietic stem cells requires isoform beta. DNA binding is required for erythroid maturation, but not for its other hemopoietic functions. Endothelial roles include development of the dorsal aorta, the site of definitive hemopoiesis in the embryo. Required for angiogenesis but not angioblast specification. Has an additional role in endocardium formation during heart development. May play a role in central nervous system development. In Danio rerio (Zebrafish), this protein is T-cell acute lymphocytic leukemia protein 1 homolog.